Reading from the N-terminus, the 345-residue chain is DNA N(6)-methyladenine demethylase ALKBH1A (345 aa).

Substrate is bound by residues tryptophan 179 and 186–188; that span reads FDW. Positions 225–345 constitute a Fe2OG dioxygenase domain; it reads RPEGAIVNYF…RININIRQVF (121 aa). 232-234 contacts 2-oxoglutarate; that stretch reads NYF. Residues histidine 243, aspartate 245, and histidine 299 each contribute to the Fe cation site. A 2-oxoglutarate-binding site is contributed by 336 to 342; the sequence is RININIR.

This sequence belongs to the alkB family. Fe(2+) serves as cofactor. In terms of tissue distribution, mostly expressed in siliques, to a lower extent in roots, seedlings and rosette leaves, but barely in cauline leaves, stems and flowers.

The protein localises to the nucleus. Its subcellular location is the cytoplasm. It carries out the reaction an N(6)-methyl-2'-deoxyadenosine in DNA + 2-oxoglutarate + O2 = a 2'-deoxyadenosine in DNA + formaldehyde + succinate + CO2. Functionally, dioxygenase that catalyzes DNA N(6)-methyladenine (6 mA) demethylation to modulate gene expression and regulate seed germination. The chain is DNA N(6)-methyladenine demethylase ALKBH1A from Arabidopsis thaliana (Mouse-ear cress).